Consider the following 518-residue polypeptide: Probable lysine--tRNA ligase, cytoplasmic (518 aa).

The protein belongs to the class-II aminoacyl-tRNA synthetase family. In terms of assembly, homodimer.

It localises to the cytoplasm. It carries out the reaction tRNA(Lys) + L-lysine + ATP = L-lysyl-tRNA(Lys) + AMP + diphosphate. The chain is Probable lysine--tRNA ligase, cytoplasmic from Enterocytozoon bieneusi (strain H348) (Microsporidian parasite).